Here is a 148-residue protein sequence, read N- to C-terminus: SsrA-binding protein (148 aa).

This sequence belongs to the SmpB family.

The protein localises to the cytoplasm. In terms of biological role, required for rescue of stalled ribosomes mediated by trans-translation. Binds to transfer-messenger RNA (tmRNA), required for stable association of tmRNA with ribosomes. tmRNA and SmpB together mimic tRNA shape, replacing the anticodon stem-loop with SmpB. tmRNA is encoded by the ssrA gene; the 2 termini fold to resemble tRNA(Ala) and it encodes a 'tag peptide', a short internal open reading frame. During trans-translation Ala-aminoacylated tmRNA acts like a tRNA, entering the A-site of stalled ribosomes, displacing the stalled mRNA. The ribosome then switches to translate the ORF on the tmRNA; the nascent peptide is terminated with the 'tag peptide' encoded by the tmRNA and targeted for degradation. The ribosome is freed to recommence translation, which seems to be the essential function of trans-translation. This is SsrA-binding protein from Ehrlichia ruminantium (strain Gardel).